Reading from the N-terminus, the 229-residue chain is 2,3-bisphosphoglycerate-dependent phosphoglycerate mutase (229 aa).

Substrate-binding positions include 8-15 (RHGESAWN), 21-22 (TG), arginine 60, 87-90 (ERHY), lysine 98, 114-115 (RR), and 183-184 (GN). The active-site Tele-phosphohistidine intermediate is histidine 9. The active-site Proton donor/acceptor is the glutamate 87.

The protein belongs to the phosphoglycerate mutase family. BPG-dependent PGAM subfamily. As to quaternary structure, homodimer.

It carries out the reaction (2R)-2-phosphoglycerate = (2R)-3-phosphoglycerate. The protein operates within carbohydrate degradation; glycolysis; pyruvate from D-glyceraldehyde 3-phosphate: step 3/5. Catalyzes the interconversion of 2-phosphoglycerate and 3-phosphoglycerate. The protein is 2,3-bisphosphoglycerate-dependent phosphoglycerate mutase of Polynucleobacter necessarius subsp. necessarius (strain STIR1).